Here is a 103-residue protein sequence, read N- to C-terminus: Small ribosomal subunit protein uS10 (103 aa).

This sequence belongs to the universal ribosomal protein uS10 family. Part of the 30S ribosomal subunit.

Its function is as follows. Involved in the binding of tRNA to the ribosomes. In Borrelia recurrentis (strain A1), this protein is Small ribosomal subunit protein uS10.